The sequence spans 429 residues: Zinc metalloproteinase nas-17 (429 aa).

The first 21 residues, 1–21, serve as a signal peptide directing secretion; it reads MFLRPSTLLLTLFLALVAGSA. A glycan (N-linked (GlcNAc...) asparagine) is linked at Asn-54. In terms of domain architecture, Peptidase M12A spans 62–251; the sequence is RQITKIWKKW…VNINVRYSCG (190 aa). 4 disulfide bridges follow: Cys-104-Cys-250, Cys-125-Cys-144, Cys-252-Cys-272, and Cys-274-Cys-283. His-152 lines the Zn(2+) pocket. Glu-153 is an active-site residue. Positions 156 and 162 each coordinate Zn(2+). An EGF-like domain is found at 245–284; the sequence is NVRYSCGCAKSLTCENGGYTNPSNCATCVCPTGFAGTLCN.

Requires Zn(2+) as cofactor.

Its subcellular location is the secreted. In terms of biological role, metalloprotease. The chain is Zinc metalloproteinase nas-17 (nas-17) from Caenorhabditis elegans.